A 359-amino-acid chain; its full sequence is Fructose-bisphosphate aldolase, cytoplasmic isozyme (359 aa).

Arg52 and Lys142 together coordinate substrate. The active-site Proton acceptor is Glu184. Lys226 functions as the Schiff-base intermediate with dihydroxyacetone-P in the catalytic mechanism.

This sequence belongs to the class I fructose-bisphosphate aldolase family.

The protein resides in the cytoplasm. The enzyme catalyses beta-D-fructose 1,6-bisphosphate = D-glyceraldehyde 3-phosphate + dihydroxyacetone phosphate. Its pathway is carbohydrate degradation; glycolysis; D-glyceraldehyde 3-phosphate and glycerone phosphate from D-glucose: step 4/4. The protein is Fructose-bisphosphate aldolase, cytoplasmic isozyme (ALDC) of Cicer arietinum (Chickpea).